A 721-amino-acid polypeptide reads, in one-letter code: Catalase-peroxidase (721 aa).

Positions 95–223 (WHSAGSYRLF…LGAVHMGLIY (129 aa)) form a cross-link, tryptophyl-tyrosyl-methioninium (Trp-Tyr) (with M-249). His96 serves as the catalytic Proton acceptor. Residues 223–249 (YVNPQGRDGKPDPLKSAHDVRVTFKRM) constitute a cross-link (tryptophyl-tyrosyl-methioninium (Tyr-Met) (with W-95)). His264 lines the heme b pocket.

This sequence belongs to the peroxidase family. Peroxidase/catalase subfamily. In terms of assembly, homodimer or homotetramer. Requires heme b as cofactor. Formation of the three residue Trp-Tyr-Met cross-link is important for the catalase, but not the peroxidase activity of the enzyme.

It carries out the reaction H2O2 + AH2 = A + 2 H2O. It catalyses the reaction 2 H2O2 = O2 + 2 H2O. In terms of biological role, bifunctional enzyme with both catalase and broad-spectrum peroxidase activity. The polypeptide is Catalase-peroxidase (Parvibaculum lavamentivorans (strain DS-1 / DSM 13023 / NCIMB 13966)).